An 836-amino-acid polypeptide reads, in one-letter code: Tuftelin-interacting protein 11 (836 aa).

A compositionally biased stretch (basic and acidic residues) spans 1–13; that stretch reads MSLSHLYRDGEGH. Disordered regions lie at residues 1-31, 54-73, and 85-136; these read MSLSHLYRDGEGHMDDDEDERENFEITDWDL, WAERDSDEERPSFGGKRARD, and LKKG…AGGT. The required for interaction with DHX15 stretch occupies residues 1-50; the sequence is MSLSHLYRDGEGHMDDDEDERENFEITDWDLQNEFNPNRQRHWQTKEEAT. At serine 2 the chain carries Phosphoserine. The segment covering 14–28 has biased composition (acidic residues); the sequence is MDDDEDERENFEITD. The segment covering 54–64 has biased composition (basic and acidic residues); it reads WAERDSDEERP. Serine 59 and serine 98 each carry phosphoserine. Positions 91–102 are enriched in acidic residues; the sequence is EEAELEDSDDEE. Residues 103–116 are compositionally biased toward basic and acidic residues; that stretch reads KPVKQDEFPKDFGP. Serine 144 carries the post-translational modification Phosphoserine. In terms of domain architecture, G-patch spans 149 to 195; it reads TKGIGQKLLQKMGYVPGRGLGKNAQGIINPIEAKQRKGKGAVGAYGS. Residues 183 to 236 are disordered; the sequence is QRKGKGAVGAYGSERTTQSLQDFPVVDSEEEAEEEFQKELSQWRKDPSGSKKKP. At serine 210 the chain carries Phosphoserine. The span at 217–231 shows a compositional bias: basic and acidic residues; it reads EFQKELSQWRKDPSG. A Nuclear localization signal motif is present at residues 699–704; sequence VKDKFN. Residues 709–733 are required for nuclear speckle localization; it reads IMNRAVSSNVGAYMQPGARENIAYL.

This sequence belongs to the TFP11/STIP family. Identified in the spliceosome C complex. Found in the Intron Large (IL) complex, a post-mRNA release spliceosomal complex containing the excised intron, U2, U5 and U6 snRNPs, and splicing factors. Interacts with TUFT1. Interacts with DHX15; indicative for a recruitment of DHX15 to the IL complex. Interacts with GCFC2.

Its subcellular location is the cytoplasm. It is found in the nucleus. Its function is as follows. Involved in pre-mRNA splicing, specifically in spliceosome disassembly during late-stage splicing events. Intron turnover seems to proceed through reactions in two lariat-intron associated complexes termed Intron Large (IL) and Intron Small (IS). In cooperation with DHX15 seems to mediate the transition of the U2, U5 and U6 snRNP-containing IL complex to the snRNP-free IS complex leading to efficient debranching and turnover of excised introns. May play a role in the differentiation of ameloblasts and odontoblasts or in the forming of the enamel extracellular matrix. The protein is Tuftelin-interacting protein 11 (TFIP11) of Sus scrofa (Pig).